Reading from the N-terminus, the 338-residue chain is Ketoreductase azaE (338 aa).

NADP(+) contacts are provided by Lys41 and Tyr166.

This sequence belongs to the NAD(P)-dependent epimerase/dehydratase family. Dihydroflavonol-4-reductase subfamily.

It functions in the pathway secondary metabolite biosynthesis. In terms of biological role, ketoreductase; part of the gene cluster that mediates the biosynthesis of azaphilones, a class of fungal metabolites characterized by a highly oxygenated pyrano-quinone bicyclic core and exhibiting a broad range of bioactivities. In the first step, the non-reducing polyketide synthase azaA forms the hexaketide precursor from successive condensations of five malonyl-CoA units, presumably with a simple acetyl-CoA starter unit. The reactive polyketide chain then undergoes a PT-mediated C2-C7 cyclization to afford the aromatic ring and is eventually released as an aldehyde through the R-domain. The putative ketoreductase azaE is proposed to catalyze the reduction of the terminal ketone resulting in the early culture product FK17-P2a. The monooxygenase azaH was demonstrated to be the only enzyme required to convert FK17-P2a to azanigerone E. AzaH first hydroxylates the benzaldehyde intermediate FK17-P2a at C4, which triggers the formation of the pyran-ring to afford azanigerone E. In parallel, the 2,4-dimethylhexanoyl chain is synthesized by the HR-PKS azaB and is proposed to be transferred to the C4-hydroxyl of azanigerone E by the acyltransferase azaD directly from the ACP domain of azaB. Alternatively, the 2,4-dimethyl-hexanoyl chain may be offloaded from the HR-PKS as a carboxylic acid and converted to an acyl-CoA by azaF. The resulting acyl-CoA molecule could then be taken up as a substrate by AzaD to form azanigerone B. To yield the carboxylic acid substituent in azanigerone A, the hydroxypropyl side chain of azanigerone B would need to undergo a C-C oxidative cleavage catalyzed by cytochrome P450 AzaI. AzaI is proposed to act on a vicinal diol that leads to a C-C bond scission either through an alkoxyradical intermediate or a peroxy complex. In the biosynthesis of azanigerone A, azanigerone B first undergoes hydroxylation at C10, possibly catalyzed by one of the two FAD-dependent monooxygenases encoded in the cluster, azaG or azaL, resulting in the vicinal diol azanigerone C. Oxidative cleavage of azanigerone C by azaI would yield the corresponding aldehyde derivative of azanigerone A. Finally, the dehydrogenase azaJ is proposed to convert the aldehyde functional group into the carboxylic acid, completing the conversion from azanigerone B to azanigerone A. Alternatively, the oxidation of aldehyde to carboxylic acid may be catalyzed by the same P450 enzyme azaI via consecutive oxidation or by endogenous alcohol dehydrogenase. This is Ketoreductase azaE from Aspergillus niger (strain ATCC 1015 / CBS 113.46 / FGSC A1144 / LSHB Ac4 / NCTC 3858a / NRRL 328 / USDA 3528.7).